The following is a 198-amino-acid chain: FMN-dependent NADH:quinone oxidoreductase (198 aa).

96 to 99 (MYNF) contacts FMN.

It belongs to the azoreductase type 1 family. In terms of assembly, homodimer. FMN serves as cofactor.

It carries out the reaction 2 a quinone + NADH + H(+) = 2 a 1,4-benzosemiquinone + NAD(+). It catalyses the reaction N,N-dimethyl-1,4-phenylenediamine + anthranilate + 2 NAD(+) = 2-(4-dimethylaminophenyl)diazenylbenzoate + 2 NADH + 2 H(+). In terms of biological role, quinone reductase that provides resistance to thiol-specific stress caused by electrophilic quinones. Also exhibits azoreductase activity. Catalyzes the reductive cleavage of the azo bond in aromatic azo compounds to the corresponding amines. In Burkholderia thailandensis (strain ATCC 700388 / DSM 13276 / CCUG 48851 / CIP 106301 / E264), this protein is FMN-dependent NADH:quinone oxidoreductase.